The primary structure comprises 435 residues: NADH-quinone oxidoreductase subunit D (435 aa).

It belongs to the complex I 49 kDa subunit family. In terms of assembly, NDH-1 is composed of 14 different subunits. Subunits NuoB, C, D, E, F, and G constitute the peripheral sector of the complex.

It localises to the cell inner membrane. It carries out the reaction a quinone + NADH + 5 H(+)(in) = a quinol + NAD(+) + 4 H(+)(out). Functionally, NDH-1 shuttles electrons from NADH, via FMN and iron-sulfur (Fe-S) centers, to quinones in the respiratory chain. The immediate electron acceptor for the enzyme in this species is believed to be ubiquinone. Couples the redox reaction to proton translocation (for every two electrons transferred, four hydrogen ions are translocated across the cytoplasmic membrane), and thus conserves the redox energy in a proton gradient. In Xanthomonas axonopodis pv. citri (strain 306), this protein is NADH-quinone oxidoreductase subunit D.